The following is a 53-amino-acid chain: Conotoxin Cal9.2e (53 aa).

Positions 1-6 (KKGVTQ) are excised as a propeptide. 3 disulfides stabilise this stretch: C15/C32, C20/C42, and C22/C47.

As to expression, expressed by the venom duct.

It localises to the secreted. In terms of biological role, probable neurotoxin with unknown target. Possibly targets ion channels. This Californiconus californicus (California cone) protein is Conotoxin Cal9.2e.